The primary structure comprises 149 residues: 3-dehydroquinate dehydratase (149 aa).

The active-site Proton acceptor is the Tyr22. Substrate contacts are provided by Asn74, His80, and Asp87. The active-site Proton donor is the His100. Substrate is bound by residues 101–102 and Arg111; that span reads MS.

The protein belongs to the type-II 3-dehydroquinase family. Homododecamer.

The enzyme catalyses 3-dehydroquinate = 3-dehydroshikimate + H2O. Its pathway is metabolic intermediate biosynthesis; chorismate biosynthesis; chorismate from D-erythrose 4-phosphate and phosphoenolpyruvate: step 3/7. Functionally, catalyzes a trans-dehydration via an enolate intermediate. The protein is 3-dehydroquinate dehydratase of Leptothrix cholodnii (strain ATCC 51168 / LMG 8142 / SP-6) (Leptothrix discophora (strain SP-6)).